The following is a 387-amino-acid chain: Chorismate synthase (387 aa).

Residues Arg-39 and Arg-45 each contribute to the NADP(+) site. The disordered stretch occupies residues 92-113 (PVEEGSEEKRRVSRPRPGHADL). FMN is bound by residues 130–132 (RSS), 250–251 (QA), Gly-295, 310–314 (KPIPT), and Arg-336.

This sequence belongs to the chorismate synthase family. Homotetramer. It depends on FMNH2 as a cofactor.

It catalyses the reaction 5-O-(1-carboxyvinyl)-3-phosphoshikimate = chorismate + phosphate. The protein operates within metabolic intermediate biosynthesis; chorismate biosynthesis; chorismate from D-erythrose 4-phosphate and phosphoenolpyruvate: step 7/7. Its function is as follows. Catalyzes the anti-1,4-elimination of the C-3 phosphate and the C-6 proR hydrogen from 5-enolpyruvylshikimate-3-phosphate (EPSP) to yield chorismate, which is the branch point compound that serves as the starting substrate for the three terminal pathways of aromatic amino acid biosynthesis. This reaction introduces a second double bond into the aromatic ring system. In Brevibacillus brevis (strain 47 / JCM 6285 / NBRC 100599), this protein is Chorismate synthase.